The chain runs to 259 residues: Malonyl-[acyl-carrier protein] O-methyltransferase (259 aa).

Belongs to the methyltransferase superfamily.

The enzyme catalyses malonyl-[ACP] + S-adenosyl-L-methionine = malonyl-[ACP] methyl ester + S-adenosyl-L-homocysteine. The protein operates within cofactor biosynthesis; biotin biosynthesis. Converts the free carboxyl group of a malonyl-thioester to its methyl ester by transfer of a methyl group from S-adenosyl-L-methionine (SAM). It allows to synthesize pimeloyl-ACP via the fatty acid synthetic pathway. The polypeptide is Malonyl-[acyl-carrier protein] O-methyltransferase (Anoxybacillus flavithermus (strain DSM 21510 / WK1)).